Consider the following 543-residue polypeptide: Protein P78/83 (543 aa).

Disordered regions lie at residues 147–222 (QALP…QPAA), 235–325 (RNEK…SLSN), and 373–400 (MAKS…ANTP). Residues 182-221 (AAPPPPPSPVPNIPAPPPPPPPSMSELPPAPPMPTEPQPA) show a composition bias toward pro residues. A WH2 domain is found at 226–246 (DRQQLLEAIRNEKNRTRLRPV). The span at 271–321 (PKPPSASPPPPPPPPPPPAPPAPPPMVDLSSAPPPPPLVDLPSEMLPPPAP) shows a compositional bias: pro residues. Polar residues predominate over residues 375–384 (KSSSEATSND).

In terms of assembly, forms a complex with proteins C42 and E27. Interacts with host actin-related protein 2/3 complex. Interacts with protein Ac102.

It is found in the host cytoplasm. It localises to the host nucleus. Plays a role in the transport of the nucleocapsids from the cytoplasm toward the host nucleus together with the host actin-polymerizing Arp2/3 complex. The polypeptide is Protein P78/83 (P61) (Lepidoptera (butterflies and moths)).